A 1343-amino-acid chain; its full sequence is Vascular endothelial growth factor receptor 2 (1343 aa).

A signal peptide spans 1–19; it reads MESRALLAVALWFCVETRA. At 20-760 the chain is on the extracellular side; the sequence is ASVGLPGDSL…EGVQEKTNLE (741 aa). Asparagine 46, asparagine 96, asparagine 143, asparagine 158, and asparagine 245 each carry an N-linked (GlcNAc...) asparagine glycan. 7 consecutive Ig-like C2-type domains span residues 46-109, 141-207, 224-320, 328-414, 421-540, 547-654, and 663-749; these read NTTL…RDTD, NKNK…INDE, YDVV…KNKT, PFIA…HMVS, PQIG…RVIS, PEIT…LVKQ, and PMIT…TLFI. The cysteines at positions 53 and 103 are disulfide-linked. An intrachain disulfide couples cysteine 150 to cysteine 200. Residues cysteine 246 and cysteine 307 are joined by a disulfide bond. N-linked (GlcNAc...) asparagine glycans are attached at residues asparagine 318, asparagine 374, asparagine 395, asparagine 507, asparagine 576, asparagine 609, asparagine 615, asparagine 627, asparagine 671, asparagine 700, and asparagine 717. Intrachain disulfides connect cysteine 445/cysteine 526 and cysteine 567/cysteine 638. Cysteine 684 and cysteine 733 are joined by a disulfide. Residues 761 to 781 traverse the membrane as a helical segment; the sequence is VIILVGTAVIAMFFWLLLVIL. Topologically, residues 782–1343 are cytoplasmic; sequence VRTVKRANEG…SGTTLRSSPV (562 aa). Phosphotyrosine is present on tyrosine 797. Residues 830-1158 enclose the Protein kinase domain; the sequence is LKLGKPLGRG…FSELVEHLGN (329 aa). ATP is bound by residues 836 to 844 and lysine 864; that span reads LGRGAFGQV. Tyrosine 947 carries the post-translational modification Phosphotyrosine; by autocatalysis. Serine 978 and serine 980 each carry phosphoserine. At tyrosine 992 the chain carries Phosphotyrosine; by autocatalysis. Cysteine 1020 and cysteine 1041 are disulfide-bonded. The active-site Proton acceptor is aspartate 1024. Phosphotyrosine; by autocatalysis is present on residues tyrosine 1050, tyrosine 1055, tyrosine 1171, and tyrosine 1210. Residues serine 1227 and serine 1231 each carry the phosphoserine modification. Threonine 1234 carries the phosphothreonine modification. Residues 1267-1314 are disordered; that stretch reads TLEDRNKLSPSFGGMMPSKSRESVASEGSNQTSGYQSGYHSDDTDTTV. Residues 1292–1305 show a composition bias toward polar residues; it reads SEGSNQTSGYQSGY. Tyrosine 1301, tyrosine 1305, and tyrosine 1315 each carry phosphotyrosine; by autocatalysis.

This sequence belongs to the protein kinase superfamily. Tyr protein kinase family. CSF-1/PDGF receptor subfamily. In terms of assembly, homodimer in the presence of bound dimeric VEGFA, VEGFC or VEGFD ligands; monomeric in the absence of bound ligands. Can also form heterodimers with FLT1/VEGFR1 and KDR/VEGFR2. Interacts (tyrosine phosphorylated) with LFYN, NCK1, PLCG1. Interacts (tyrosine-phosphorylated active form preferentially) with DAB2IP (via C2 domain and active form preferentially); the interaction occurs at the late phase of VEGFA response and inhibits KDR/VEGFR2 activity. Interacts with SHBSH2D2A/TSAD, GRB2, MYOF, CBL and PDCD6. Interacts (via C-terminus domain) with ERN1 (via kinase domain); the interaction is facilitated in a XBP1- and vascular endothelial growth factor (VEGF)-dependent manner in endothelial cells. Interacts (via juxtamembrane region) with chaperone PDCL3 (via thioredoxin fold region); the interaction leads to increased KDR/VEGFR2 abundance through inhibition of its ubiquitination and degradation. Interacts (tyrosine phosphorylated) with CCDC88A/GIV (via SH2-like region); binding requires autophosphorylation of the KDR/VEGFR2 C-terminal region. Interacts with isoform 2 of BSG. Interacts with SLC31A1; this interaction is induced upon VEGFA stimulation leading to SLC31A1 and KDR subsequent co-internalization to early endosomes, thereby activating KDR downstream signaling in endothelial cells. Post-translationally, N-glycosylated. Ubiquitinated. Tyrosine phosphorylation of the receptor promotes its poly-ubiquitination, leading to its degradation via the proteasome or lysosomal proteases. In terms of processing, autophosphorylated on tyrosine residues upon ligand binding. Autophosphorylation occurs in trans, i.e. one subunit of the dimeric receptor phosphorylates tyrosine residues on the other subunit. Phosphorylation at Tyr-947 is important for interaction with SH2D2A/TSAD and VEGFA-mediated reorganization of the actin cytoskeleton. Phosphorylation at Tyr-1171 is important for interaction with PLCG1 and SHB. Phosphorylation at Tyr-1210 is important for interaction with NCK1 and FYN. Dephosphorylated by PTPRB. Dephosphorylated by PTPRJ at Tyr-797, Tyr-947, Tyr-992, Tyr-1050, Tyr-1055, Tyr-1171 and Tyr-1210. Post-translationally, the inhibitory disulfide bond between Cys-1020 and Cys-1041 may serve as a specific molecular switch for H(2)S-induced modification that regulates KDR/VEGFR2 function. Expressed in the post-pubertal mammary glands.

It is found in the cell membrane. The protein localises to the cytoplasm. The protein resides in the nucleus. Its subcellular location is the cytoplasmic vesicle. It localises to the early endosome. It is found in the cell junction. The protein localises to the endoplasmic reticulum. It carries out the reaction L-tyrosyl-[protein] + ATP = O-phospho-L-tyrosyl-[protein] + ADP + H(+). Present in an inactive conformation in the absence of bound ligand. Binding of VEGFA, VEGFC or VEGFD leads to dimerization and activation by autophosphorylation on tyrosine residues. May be regulated by hydrogen sulfide (H(2)S) levels via a sensitive intracellular disulfide bond. In terms of biological role, tyrosine-protein kinase that acts as a cell-surface receptor for VEGFA, VEGFC and VEGFD. Plays an essential role in the regulation of angiogenesis, vascular development, vascular permeability, and embryonic hematopoiesis. Promotes proliferation, survival, migration and differentiation of endothelial cells. Promotes reorganization of the actin cytoskeleton. Isoforms lacking a transmembrane domain may function as decoy receptors for VEGFA, VEGFC and/or VEGFD. Modulates FLT1 and FLT4 signaling by forming heterodimers. Binding of vascular growth factors to isoform 1 leads to the activation of several signaling cascades. Activation of PLCG1 leads to the production of the cellular signaling molecules diacylglycerol and inositol-1,4,5-trisphosphate and the activation of protein kinase C. Mediates activation of MAPK1/ERK2, MAPK3/ERK1 and the MAP kinase signaling pathway, as well as of the AKT1 signaling pathway. Mediates phosphorylation of PIK3R1, the regulatory subunit of phosphatidylinositol 3-kinase, reorganization of the actin cytoskeleton and activation of PTK2/FAK1. Required for VEGFA-mediated induction of NOS2 and NOS3, leading to the production of the signaling molecule nitric oxide (NO) by endothelial cells. Phosphorylates PLCG1. Promotes phosphorylation of FYN, NCK1, NOS3, PIK3R1, PTK2/FAK1 and SRC. The sequence is that of Vascular endothelial growth factor receptor 2 from Rattus norvegicus (Rat).